A 221-amino-acid polypeptide reads, in one-letter code: Germin-like protein subfamily 1 member 17 (221 aa).

Residues 1–21 form the signal peptide; sequence MKVSMSLILITLSALVTIAKA. Cys31 and Cys48 are disulfide-bonded. Positions 76–213 constitute a Cupin type-1 domain; sequence SNVTTVNVDQ…AFQLDVNVVK (138 aa). N-linked (GlcNAc...) asparagine glycosylation is present at Asn77. Mn(2+) is bound by residues His110, His112, Glu117, and His159.

It belongs to the germin family. Oligomer (believed to be a pentamer but probably hexamer).

It localises to the secreted. Its subcellular location is the extracellular space. The protein localises to the apoplast. May play a role in plant defense. Probably has no oxalate oxidase activity even if the active site is conserved. In Arabidopsis thaliana (Mouse-ear cress), this protein is Germin-like protein subfamily 1 member 17.